The chain runs to 63 residues: Large ribosomal subunit protein bL28 (63 aa).

This sequence belongs to the bacterial ribosomal protein bL28 family.

The polypeptide is Large ribosomal subunit protein bL28 (Clostridium botulinum (strain ATCC 19397 / Type A)).